The primary structure comprises 477 residues: Endo-1,4-beta-xylanase A (477 aa).

The N-terminal stretch at 1–41 is a signal peptide; that stretch reads MGSYALPRSGVRRSIRVLLLALVVGVLGTATALIAPPGAHA. A GH10 domain is found at 42–340; the sequence is AESTLGAAAA…KAAYTAVLDA (299 aa). The active-site Proton donor is Glu-169. Glu-277 functions as the Nucleophile in the catalytic mechanism. One can recognise a Ricin B-type lectin domain in the interval 361–477; that stretch reads SGRCLDVPDA…NGSNQRWTRT (117 aa). Disulfide bonds link Cys-364–Cys-383, Cys-406–Cys-423, and Cys-447–Cys-466.

The protein belongs to the glycosyl hydrolase 10 (cellulase F) family.

It is found in the secreted. It carries out the reaction Endohydrolysis of (1-&gt;4)-beta-D-xylosidic linkages in xylans.. The protein operates within glycan degradation; xylan degradation. Functionally, contributes to hydrolyze hemicellulose, the major component of plant cell-walls. XLNA and XLNB seem to act sequentially on the substrate to yield xylobiose and xylose as carbon sources. The protein is Endo-1,4-beta-xylanase A (xlnA) of Streptomyces lividans.